Reading from the N-terminus, the 1070-residue chain is DNA-directed RNA polymerase subunit beta (1070 aa).

Belongs to the RNA polymerase beta chain family. In plastids the minimal PEP RNA polymerase catalytic core is composed of four subunits: alpha, beta, beta', and beta''. When a (nuclear-encoded) sigma factor is associated with the core the holoenzyme is formed, which can initiate transcription.

Its subcellular location is the plastid. The protein localises to the chloroplast. The enzyme catalyses RNA(n) + a ribonucleoside 5'-triphosphate = RNA(n+1) + diphosphate. DNA-dependent RNA polymerase catalyzes the transcription of DNA into RNA using the four ribonucleoside triphosphates as substrates. The polypeptide is DNA-directed RNA polymerase subunit beta (Populus trichocarpa (Western balsam poplar)).